We begin with the raw amino-acid sequence, 337 residues long: tRNA N6-adenosine threonylcarbamoyltransferase (337 aa).

His-111 and His-115 together coordinate Fe cation. Substrate-binding positions include 134 to 138 (LVSGG), Asp-167, Gly-180, and Asn-272. Residue Asp-300 coordinates Fe cation.

Belongs to the KAE1 / TsaD family. The cofactor is Fe(2+).

The protein localises to the cytoplasm. The enzyme catalyses L-threonylcarbamoyladenylate + adenosine(37) in tRNA = N(6)-L-threonylcarbamoyladenosine(37) in tRNA + AMP + H(+). Its function is as follows. Required for the formation of a threonylcarbamoyl group on adenosine at position 37 (t(6)A37) in tRNAs that read codons beginning with adenine. Is involved in the transfer of the threonylcarbamoyl moiety of threonylcarbamoyl-AMP (TC-AMP) to the N6 group of A37, together with TsaE and TsaB. TsaD likely plays a direct catalytic role in this reaction. The protein is tRNA N6-adenosine threonylcarbamoyltransferase of Escherichia coli O157:H7.